An 82-amino-acid polypeptide reads, in one-letter code: uncharacterized protein (82 aa).

The disordered stretch occupies residues 1-20 (MMNLSPPFKSPSGSSRAGRR).

This is an uncharacterized protein from Archaeoglobus fulgidus (strain ATCC 49558 / DSM 4304 / JCM 9628 / NBRC 100126 / VC-16).